The chain runs to 267 residues: 3-methyl-2-oxobutanoate hydroxymethyltransferase (267 aa).

Mg(2+) contacts are provided by aspartate 46 and aspartate 85. Residues 46 to 47 (DS), aspartate 85, and lysine 115 each bind 3-methyl-2-oxobutanoate. Residue glutamate 117 coordinates Mg(2+). The active-site Proton acceptor is glutamate 184.

It belongs to the PanB family. In terms of assembly, homodecamer; pentamer of dimers. Mg(2+) serves as cofactor.

It is found in the cytoplasm. It carries out the reaction 3-methyl-2-oxobutanoate + (6R)-5,10-methylene-5,6,7,8-tetrahydrofolate + H2O = 2-dehydropantoate + (6S)-5,6,7,8-tetrahydrofolate. The protein operates within cofactor biosynthesis; (R)-pantothenate biosynthesis; (R)-pantoate from 3-methyl-2-oxobutanoate: step 1/2. Catalyzes the reversible reaction in which hydroxymethyl group from 5,10-methylenetetrahydrofolate is transferred onto alpha-ketoisovalerate to form ketopantoate. The chain is 3-methyl-2-oxobutanoate hydroxymethyltransferase from Citrifermentans bemidjiense (strain ATCC BAA-1014 / DSM 16622 / JCM 12645 / Bem) (Geobacter bemidjiensis).